The following is a 427-amino-acid chain: MLDTVAQSPDIDALMNDIGRKARAASRPLAFASTESKNRALAAMADAILARKDHILAENAKDLKDVEGTDILASFVDRLTLTEKRVAEMAEGIRAIAALPDPVGEVFAAWDRPNGLKIERVRTPLGVIGVIFESRPNVTADAGALCLKAGNAVILRCGSDSRRSSQAILECLVEGLKAAGLPEHAIQLVPVTDRAAVGAMLRGLEGTIDVIVPRGGKSLVARVQSEARVPVFAHLEGLCHVYIDASADLDMAKAIVVNAKMRRTGICGSAETLLVDAKAAQTHLKPLLDGLTEAGCEIRASTEVLRLVPGLKTATEEDWSTEYLDAIISVTIVDGISGAIDHISRYSSNHTEAVIAEDPAVVERFFTEIDSAILLHNASTQFADGGEFGMGAEIGIATGKMHARGPVGVEQLTSFKYRVHGTGQIRP.

Belongs to the gamma-glutamyl phosphate reductase family.

Its subcellular location is the cytoplasm. It carries out the reaction L-glutamate 5-semialdehyde + phosphate + NADP(+) = L-glutamyl 5-phosphate + NADPH + H(+). Its pathway is amino-acid biosynthesis; L-proline biosynthesis; L-glutamate 5-semialdehyde from L-glutamate: step 2/2. Its function is as follows. Catalyzes the NADPH-dependent reduction of L-glutamate 5-phosphate into L-glutamate 5-semialdehyde and phosphate. The product spontaneously undergoes cyclization to form 1-pyrroline-5-carboxylate. The chain is Gamma-glutamyl phosphate reductase from Rhizobium rhizogenes (strain K84 / ATCC BAA-868) (Agrobacterium radiobacter).